Reading from the N-terminus, the 569-residue chain is MAYKIDRKTYAQTYGPTAGDRVRLADTELFIEVEKDLTTYGDEVKFGGGKVIRDGMGQSQVRRADGAVDTVITNALIVDWWGIIKADVGIKDGMIFEIGKAGNPDIQDNVDIVIGASTEVIAGEGHILTAGSIDTHIHFICPQQIETALASGITTMLGGGTGPATGTNATTCTPGSFHISRMLQSAEAFPMNLGFYGKGNSTNESNLIDQVEAGACGLKLHEDWGTTPSTINSCLNIADKFDVQVCIHTDTLNEAGFVEDTINAIAGRTIHTFHTEGAGGGHAPDIIKICGEKNVLPSSTNPTRPYTRNTLEEHLDMLMVCHHLDSKIPEDIAFAESRIRRETIAAEDILHDIGAFSVIASDSQAMGRVGEVITRTFQTAHKMKVQRGPLMQDSDRNDNYRVKRYISKVTINPAIAHGIDKHVGSIEKGKIADLVLWKPSFFAVKPELVVKGGSIVWSQMGDANASIPTPGPVHGRPMFASFGQSLIKSSFTFLSKNSIDQNIPNKLSLQKKCIAVENTRNINKSHLKLNSKLPNILVDPQTYEVFSDGELLTCEPLDEVPMAQRYFLL.

The region spanning 131-569 is the Urease domain; that stretch reads GSIDTHIHFI…VPMAQRYFLL (439 aa). 3 residues coordinate Ni(2+): histidine 136, histidine 138, and lysine 219. Position 219 is an N6-carboxylysine (lysine 219). Histidine 221 provides a ligand contact to substrate. Residues histidine 248 and histidine 274 each coordinate Ni(2+). Histidine 322 serves as the catalytic Proton donor. Residue aspartate 362 coordinates Ni(2+).

Belongs to the metallo-dependent hydrolases superfamily. Urease alpha subunit family. In terms of assembly, heterotrimer of UreA (gamma), UreB (beta) and UreC (alpha) subunits. Three heterotrimers associate to form the active enzyme. Ni cation is required as a cofactor. Carboxylation allows a single lysine to coordinate two nickel ions.

Its subcellular location is the cytoplasm. The enzyme catalyses urea + 2 H2O + H(+) = hydrogencarbonate + 2 NH4(+). The protein operates within nitrogen metabolism; urea degradation; CO(2) and NH(3) from urea (urease route): step 1/1. This Prochlorococcus marinus (strain MIT 9215) protein is Urease subunit alpha.